Consider the following 360-residue polypeptide: Cyclin-dependent kinase 10 (360 aa).

Residues 39–323 (FEKLNRIGEG…SGDCLESSYF (285 aa)) form the Protein kinase domain. Residues 45–53 (IGEGTYGIV) and Lys68 contribute to the ATP site. Asp163 functions as the Proton acceptor in the catalytic mechanism. Thr196 bears the Phosphothreonine mark. Residues 334 to 360 (LMPTFPHHRNKRAAPAAAEGQSKRCRP) form a disordered region.

It belongs to the protein kinase superfamily. CMGC Ser/Thr protein kinase family. CDC2/CDKX subfamily. As to quaternary structure, heterodimer with CCNQ, the interaction is required for kinase activity. Interacts with ETS2. Interacts with PRK2.

It is found in the cytoplasm. Its subcellular location is the cytoskeleton. The protein resides in the cilium basal body. It catalyses the reaction L-seryl-[protein] + ATP = O-phospho-L-seryl-[protein] + ADP + H(+). It carries out the reaction L-threonyl-[protein] + ATP = O-phospho-L-threonyl-[protein] + ADP + H(+). Cyclin-dependent kinase that phosphorylates the transcription factor ETS2 (in vitro) and positively controls its proteasomal degradation (in cells). Involved in the regulation of actin cytoskeleton organization through the phosphorylation of actin dynamics regulators such as PKN2. Is a negative regulator of ciliogenesis through phosphorylation of PKN2 and promotion of RhoA signaling. The protein is Cyclin-dependent kinase 10 (Cdk10) of Mus musculus (Mouse).